Reading from the N-terminus, the 698-residue chain is Probable microcin-H47 secretion/processing ATP-binding protein MchF (698 aa).

One can recognise a Peptidase C39 domain in the interval 26–145; sequence QTETAECGLA…RYFTGIALEV (120 aa). The active site involves cysteine 32. Helical transmembrane passes span 33 to 53, 90 to 110, 289 to 311, 315 to 337, and 397 to 417; these read GLACLAMICGHFGKNIDLISL, LGALKMPCILHWDFSHFVVLV, TCVVGAIMDSIMVVGVFVMMLLY, LTWIVLGFTMVYVLIRLVTYGYY, and LLFGGINTFVAACDQVAILWL. The region spanning 176 to 458 is the ABC transmembrane type-1 domain; sequence LAKIFCLSVV…LTSFLLQLRI (283 aa). The 207-residue stretch at 492-698 folds into the ABC transporter domain; it reads LETTDLSYRY…LRTVDRIISI (207 aa). Position 526-533 (526-533) interacts with ATP; it reads GASGAGKT.

This sequence belongs to the ABC transporter superfamily.

Its subcellular location is the cell membrane. Probably involved, in conjunction with MchE, in the secretion of microcin H47. The protein is Probable microcin-H47 secretion/processing ATP-binding protein MchF (mchF) of Escherichia coli.